The sequence spans 518 residues: MTSNKKSRLPPYQPGEHVSPSVHLNCVLLTTTVVNFLDLFQLSSVLFALPNIQQALGFASEDINWVLIVYNITFAAFLLIAGQLGQRFGLEKIFIAGTATLTISNVINTTAPNKGALLAGRAISGVGAGLTAPNGLAILSNTFPDPESRNKALAIYTACGPLGSTIGTVVGSHLACMSGWRSIFWLCLILTGLSTILACLFLPRFAKRKDMPIDIPGTVVFTAGVALLVYGLNDSSRRGWTSAAMLTGIILGVCLLFVFLWVEAKVSNPAISSYLWKSGPFLVMLVAIFAFGGSFSTWFFISTQLCVNLLGYSTILTAVYFLPAAFAAIASGVFATPLIRLAGEKNILVAGLAITAAGAVAWAFAGPRIGPAVPTTGRDTAIIFVIGSPVALVPTQSILLREVEAGNHAVAGALFNTAYQVGASVILAGANALMDRSRANVQGVRQVTIDGYLNAFWLIAGVLGAAALTVMVCYWPGKDDLVERQTEEANAVGPLAVDKVDTSKDATASARSVADTRL.

The next 7 helical transmembrane spans lie at 27-47, 65-85, 88-108, 123-143, 152-172, 183-203, and 212-232; these read VLLT…SVLF, WVLI…GQLG, FGLE…NVIN, ISGV…SNTF, ALAI…VVGS, IFWL…LFLP, and PIDI…VYGL. A glycan (N-linked (GlcNAc...) asparagine) is linked at asparagine 233. Helical transmembrane passes span 242–262, 281–301, 315–335, 347–367, 380–400, 409–429, and 455–475; these read SAAM…FLWV, FLVM…WFFI, ILTA…GVFA, ILVA…FAGP, TAII…SILL, AVAG…ILAG, and AFWL…VCYW.

This sequence belongs to the major facilitator superfamily. EmrB family.

Its subcellular location is the membrane. Functionally, major facilitator superfamily transporter that may be involved in A.fumigatus adaptation to azoles such as vorizonazole. The chain is Major facilitator superfamily multidrug transporter mfsC from Aspergillus fumigatus (strain ATCC MYA-4609 / CBS 101355 / FGSC A1100 / Af293) (Neosartorya fumigata).